The following is a 1976-amino-acid chain: Myosin-10 (1976 aa).

At Arg18 the chain carries Omega-N-methylarginine. One can recognise a Myosin N-terminal SH3-like domain in the interval Thr31 to Pro81. In terms of domain architecture, Myosin motor spans Ser85–Asp783. Position 178 to 185 (Gly178 to Thr185) interacts with ATP. The residue at position 442 (Lys442) is an N6-acetyllysine. The segment at Leu661–His683 is actin-binding. An IQ domain is found at Ile786–Ala815. The stretch at Leu845 to Glu1976 forms a coiled coil. The disordered stretch occupies residues Glu1125–Glu1175. Positions Ser1129–Leu1155 are enriched in basic and acidic residues. The residue at position 1145 (Ser1145) is a Phosphoserine. Lys1241, Lys1301, and Lys1645 each carry N6-acetyllysine. Disordered stretches follow at residues Ala1697–Ala1718 and Lys1874–Glu1976. The span at Ser1698–Gln1708 shows a compositional bias: basic and acidic residues. Arg1930 is subject to Omega-N-methylarginine. Ser1935, Ser1937, Ser1938, and Ser1939 each carry phosphoserine. Arg1940 is modified (omega-N-methylarginine). Ser1952 and Ser1956 each carry phosphoserine. Position 1960 is a phosphothreonine (Thr1960). The segment covering Val1967–Glu1976 has biased composition (polar residues). Position 1975 is a phosphoserine (Ser1975).

The protein belongs to the TRAFAC class myosin-kinesin ATPase superfamily. Myosin family. As to quaternary structure, myosin is a hexameric protein that consists of 2 heavy chain subunits (MHC), 2 alkali light chain subunits (MLC) and 2 regulatory light chain subunits (MLC-2). Interacts with PLEKHG6. Interacts with ECPAS. Interacts with KIF26B. Interacts with LARP6. Interacts with MCC. Interacts with CFAP95. In terms of processing, phosphorylated by ABL2.

It is found in the cell projection. It localises to the lamellipodium. In terms of biological role, involved with LARP6 in the stabilization of type I collagen mRNAs for CO1A1 and CO1A2. During cell spreading, plays an important role in cytoskeleton reorganization, focal contacts formation (in the central part but not the margins of spreading cells), and lamellipodial extension; this function is mechanically antagonized by MYH9. Cellular myosin that appears to play a role in cytokinesis, cell shape, and specialized functions such as secretion and capping. This is Myosin-10 (Myh10) from Rattus norvegicus (Rat).